Reading from the N-terminus, the 109-residue chain is Iron-sulfur cluster assembly protein CyaY (109 aa).

It belongs to the frataxin family.

Functionally, involved in iron-sulfur (Fe-S) cluster assembly. May act as a regulator of Fe-S biogenesis. The protein is Iron-sulfur cluster assembly protein CyaY of Shewanella putrefaciens (strain CN-32 / ATCC BAA-453).